A 463-amino-acid polypeptide reads, in one-letter code: Elongation factor 1-alpha (463 aa).

At Gly2 the chain carries N,N,N-trimethylglycine. An N6,N6-dimethyllysine; alternate modification is found at Lys3. An N6-methyllysine; alternate modification is found at Lys3. In terms of domain architecture, tr-type G spans 5-239; the sequence is KNHVNVVVIG…DAIEPPSRPT (235 aa). Residues 14-21 form a G1 region; that stretch reads GHVDSGKS. 14–21 lines the GTP pocket; it reads GHVDSGKS. The residue at position 30 (Lys30) is an N6-methyllysine. Residues 70–74 are G2; it reads GITID. Lys79 carries the post-translational modification N6,N6,N6-trimethyllysine. The tract at residues 91 to 94 is G3; the sequence is DAPG. Residues 91–95 and 153–156 contribute to the GTP site; these read DAPGH and NKMD. The segment at 153–156 is G4; it reads NKMD. A G5 region spans residues 191-193; it reads SGW. Lys315 is modified (N6,N6-dimethyllysine; alternate). Lys315 is subject to N6-methyllysine; alternate. Residue Lys389 is modified to N6-methyllysine.

Belongs to the TRAFAC class translation factor GTPase superfamily. Classic translation factor GTPase family. EF-Tu/EF-1A subfamily.

Its subcellular location is the cytoplasm. In terms of biological role, this protein promotes the GTP-dependent binding of aminoacyl-tRNA to the A-site of ribosomes during protein biosynthesis. In Puccinia graminis (Black stem rust fungus), this protein is Elongation factor 1-alpha (TEF).